A 264-amino-acid polypeptide reads, in one-letter code: Phosphate import ATP-binding protein PstB (264 aa).

Residues 11 to 250 enclose the ABC transporter domain; that stretch reads LKAEALSVYY…DTTEKIFDSP (240 aa). Position 43–50 (43–50) interacts with ATP; the sequence is GPSGCGKS.

It belongs to the ABC transporter superfamily. Phosphate importer (TC 3.A.1.7) family. In terms of assembly, the complex is composed of two ATP-binding proteins (PstB), two transmembrane proteins (PstC and PstA) and a solute-binding protein (PstS).

The protein resides in the cell inner membrane. The enzyme catalyses phosphate(out) + ATP + H2O = ADP + 2 phosphate(in) + H(+). Functionally, part of the ABC transporter complex PstSACB involved in phosphate import. Responsible for energy coupling to the transport system. In Synechococcus sp. (strain ATCC 27144 / PCC 6301 / SAUG 1402/1) (Anacystis nidulans), this protein is Phosphate import ATP-binding protein PstB.